A 97-amino-acid chain; its full sequence is MANNKSAKKRIQIAERNRLMNKSYKSTVRTLTKKTLENCEKYKKNPNEDNKNLVKTSLNKAFSLIDKAVKKNVLHKNNGANRKSKINNFVKTTLTTK.

Belongs to the bacterial ribosomal protein bS20 family.

In terms of biological role, binds directly to 16S ribosomal RNA. This chain is Small ribosomal subunit protein bS20, found in Prochlorococcus marinus (strain AS9601).